The following is a 190-amino-acid chain: Potassium-transporting ATPase KdpC subunit (190 aa).

Residues 10-30 (TFIFLLLITGGVYPLLTTVLG) form a helical membrane-spanning segment.

This sequence belongs to the KdpC family. As to quaternary structure, the system is composed of three essential subunits: KdpA, KdpB and KdpC.

Its subcellular location is the cell inner membrane. Its function is as follows. Part of the high-affinity ATP-driven potassium transport (or Kdp) system, which catalyzes the hydrolysis of ATP coupled with the electrogenic transport of potassium into the cytoplasm. This subunit acts as a catalytic chaperone that increases the ATP-binding affinity of the ATP-hydrolyzing subunit KdpB by the formation of a transient KdpB/KdpC/ATP ternary complex. The polypeptide is Potassium-transporting ATPase KdpC subunit (Shigella dysenteriae serotype 1 (strain Sd197)).